Here is a 957-residue protein sequence, read N- to C-terminus: Valine--tRNA ligase (957 aa).

Residues 47-57 carry the 'HIGH' region motif; sequence PNITGQLHLGH. The 'KMSKS' region signature appears at 558 to 562; that stretch reads KMSKS. Lys561 contacts ATP. The stretch at 889-918 forms a coiled coil; sequence FNKENEINRLKKESELINRKIETIQKLLDD.

The protein belongs to the class-I aminoacyl-tRNA synthetase family. ValS type 1 subfamily. As to quaternary structure, monomer.

The protein resides in the cytoplasm. The enzyme catalyses tRNA(Val) + L-valine + ATP = L-valyl-tRNA(Val) + AMP + diphosphate. Catalyzes the attachment of valine to tRNA(Val). As ValRS can inadvertently accommodate and process structurally similar amino acids such as threonine, to avoid such errors, it has a 'posttransfer' editing activity that hydrolyzes mischarged Thr-tRNA(Val) in a tRNA-dependent manner. The protein is Valine--tRNA ligase of Blochmanniella pennsylvanica (strain BPEN).